Reading from the N-terminus, the 388-residue chain is Amylovoran biosynthesis protein AmsL (388 aa).

A run of 6 helical transmembrane segments spans residues 24–44, 47–67, 97–117, 231–251, 297–317, and 359–379; these read VLLS…ISWF, LPQL…LGSL, FTVI…LGLF, FVIM…SPVI, FYWN…VWIW, and ISVS…NLFI.

It belongs to the polysaccharide synthase family.

It localises to the cell membrane. Its pathway is glycan metabolism; exopolysaccharide biosynthesis. Involved in the biosynthesis of amylovoran which functions as a virulence factor. This Erwinia amylovora (Fire blight bacteria) protein is Amylovoran biosynthesis protein AmsL (amsL).